Reading from the N-terminus, the 29-residue chain is L-serine dehydratase, beta chain (29 aa).

The protein belongs to the iron-sulfur dependent L-serine dehydratase family. As to quaternary structure, heterodimer of an alpha chain and a beta chain. The cofactor is [4Fe-4S] cluster.

The catalysed reaction is L-serine = pyruvate + NH4(+). Its pathway is carbohydrate biosynthesis; gluconeogenesis. This is L-serine dehydratase, beta chain from Anaerotignum propionicum (Clostridium propionicum).